The primary structure comprises 330 residues: Mas-related G-protein coupled receptor member X2 (330 aa).

Residues 1–33 lie on the Extracellular side of the membrane; the sequence is MDPTTPAWGNESTTMNGNDQALPLLCGKETLIP. A helical membrane pass occupies residues 34–54; sequence VFLILFIALVGLVGNGFVLWL. Over 55 to 63 the chain is Cytoplasmic; that stretch reads LGFCMRRNA. Residues 64–84 form a helical membrane-spanning segment; it reads FSVYVLSLAGADFLFLCFQLI. Residues 85-96 lie on the Extracellular side of the membrane; it reads NCLVYLSNFFCS. A helical membrane pass occupies residues 97 to 117; it reads ISIDFPSFFTTVMTCAYLAGL. At 118-144 the chain is on the cytoplasmic side; it reads SMLSTISTERCLSVLWPIWYRCRRPRH. The chain crosses the membrane as a helical span at residues 145–165; that stretch reads LSAVVCVLLWALSLLLSILEG. The Extracellular segment spans residues 166 to 184; it reads KFCGFFFSDGDSGWCQTFD. The helical transmembrane segment at 185 to 205 threads the bilayer; sequence FITAAWLIFLFMVLCGSSLAL. Residues 206 to 228 are Cytoplasmic-facing; that stretch reads LVRILCGSRGLPLTRLYLTILLT. A helical membrane pass occupies residues 229 to 249; that stretch reads VLVFLLCGLPFGIQWFLILWI. Residues 250 to 264 are Extracellular-facing; that stretch reads WENSDVLFCHIHPVS. Residues 265 to 285 form a helical membrane-spanning segment; it reads VVLSSLNSSANPIIYFFVGTF. The Cytoplasmic portion of the chain corresponds to 286–330; the sequence is RKQWRLQQPILKLALQRALQDTAEVDHSEGCFRQGTPEMSRSSLV.

This sequence belongs to the G-protein coupled receptor 1 family. Mas subfamily.

Its subcellular location is the cell membrane. Functionally, mast cell-specific receptor for basic secretagogues, i.e. cationic amphiphilic drugs, as well as endo- or exogenous peptides, consisting of a basic head group and a hydrophobic core. Recognizes and binds small molecules containing a cyclized tetrahydroisoquinoline (THIQ), such as non-steroidal neuromuscular blocking drugs (NMBDs), including tubocurarine and atracurium. In response to these compounds, mediates pseudo-allergic reactions characterized by histamine release, inflammation and airway contraction. The sequence is that of Mas-related G-protein coupled receptor member X2 (MRGPRX2) from Pongo pygmaeus (Bornean orangutan).